The following is a 396-amino-acid chain: Tryptophan synthase beta chain (396 aa).

Position 86 is an N6-(pyridoxal phosphate)lysine (K86).

It belongs to the TrpB family. Tetramer of two alpha and two beta chains. The cofactor is pyridoxal 5'-phosphate.

The enzyme catalyses (1S,2R)-1-C-(indol-3-yl)glycerol 3-phosphate + L-serine = D-glyceraldehyde 3-phosphate + L-tryptophan + H2O. The protein operates within amino-acid biosynthesis; L-tryptophan biosynthesis; L-tryptophan from chorismate: step 5/5. Functionally, the beta subunit is responsible for the synthesis of L-tryptophan from indole and L-serine. This is Tryptophan synthase beta chain from Vibrio vulnificus (strain CMCP6).